A 312-amino-acid polypeptide reads, in one-letter code: Beta-lactamase regulatory protein BlaB (312 aa).

In Streptomyces cacaoi, this protein is Beta-lactamase regulatory protein BlaB (blaB).